Consider the following 433-residue polypeptide: Vesicle-associated protein (433 aa).

Repeat copies occupy residues glycine 112–glycine 122 and glycine 219–glycine 229. The segment at glycine 112–glycine 350 is 3 X 11 AA repeats of G-G-G-I-G-G-G-L-G-G-G. Residues valine 266–glycine 274 carry the Nuclear localization signal motif. Copy 3 of the repeat occupies glycine 340–glycine 350. Disordered stretches follow at residues arginine 366 to glycine 389 and histidine 411 to glycine 433. Residues aspartate 423–glycine 433 are compositionally biased toward basic and acidic residues.

Egg cortex.

The protein localises to the microsome membrane. It is found in the nucleus. It localises to the endoplasmic reticulum membrane. Functionally, may function as a multidomain RNA-binding protein. May play a role in nuclear RNA processing and in early development. This Strongylocentrotus purpuratus (Purple sea urchin) protein is Vesicle-associated protein (VAP-1).